The chain runs to 475 residues: Cytosolic non-specific dipeptidase (475 aa).

Ser58 bears the Phosphoserine mark. A Mn(2+)-binding site is contributed by His99. Asp101 is an active-site residue. Position 132 (Asp132) interacts with Mn(2+). The active-site Proton acceptor is the Glu166. Residues 166–167, Asp195, and His228 each bind substrate; that span reads EE. Mn(2+) contacts are provided by Glu167 and Asp195. A Phosphoserine modification is found at Ser299. Substrate contacts are provided by Thr330, Arg343, Ser417, and His445. Residue His445 participates in Mn(2+) binding.

This sequence belongs to the peptidase M20A family. As to quaternary structure, homodimer. It depends on Mn(2+) as a cofactor. As to expression, highly expressed in the parafascicular nucleus of the thalamus, tuberomammillary nucleus of the hypothalamus and the mitral cell layer of the olfactory bulb.

The protein localises to the cytoplasm. The catalysed reaction is Hydrolysis of dipeptides, preferentially hydrophobic dipeptides including prolyl amino acids.. The enzyme catalyses L-threonyl-L-threonine + H2O = 2 L-threonine. It carries out the reaction L-threonyl-L-serine + H2O = L-threonine + L-serine. It catalyses the reaction L-seryl-L-threonine + H2O = L-threonine + L-serine. The catalysed reaction is L-cysteinylglycine + H2O = L-cysteine + glycine. The enzyme catalyses L-alanyl-L-cysteine + H2O = L-cysteine + L-alanine. It carries out the reaction (S)-lactate + L-phenylalanine = N-[(S)-lactoyl]-L-phenylalanine + H2O. Inhibited by bestatin. In terms of biological role, catalyzes the peptide bond hydrolysis in dipeptides, displaying a non-redundant activity toward threonyl dipeptides. Mediates threonyl dipeptide catabolism in a tissue-specific way. Has high dipeptidase activity toward cysteinylglycine, an intermediate metabolite in glutathione metabolism. Metabolizes N-lactoyl-amino acids, both through hydrolysis to form lactic acid and amino acids, as well as through their formation by reverse proteolysis. Plays a role in the regulation of cell cycle arrest and apoptosis. The chain is Cytosolic non-specific dipeptidase (Cndp2) from Mus musculus (Mouse).